Reading from the N-terminus, the 296-residue chain is tRNA dimethylallyltransferase (296 aa).

9–16 (GPTAVGKT) lines the ATP pocket. 11 to 16 (TAVGKT) contributes to the substrate binding site. Residues 34 to 37 (DSRQ) are interaction with substrate tRNA.

This sequence belongs to the IPP transferase family. In terms of assembly, monomer. Mg(2+) is required as a cofactor.

The catalysed reaction is adenosine(37) in tRNA + dimethylallyl diphosphate = N(6)-dimethylallyladenosine(37) in tRNA + diphosphate. Catalyzes the transfer of a dimethylallyl group onto the adenine at position 37 in tRNAs that read codons beginning with uridine, leading to the formation of N6-(dimethylallyl)adenosine (i(6)A). The sequence is that of tRNA dimethylallyltransferase from Chloroflexus aggregans (strain MD-66 / DSM 9485).